A 470-amino-acid chain; its full sequence is TNF receptor-associated factor 4 (470 aa).

The segment at 18-58 (CPLCGKPMREPVQVSTCGHRFCDTCLQEFLSEGVFKCPEDQ) adopts an RING-type zinc-finger fold. TRAF-type zinc fingers lie at residues 101–154 (GHLN…EAYE), 155–208 (SHEG…DTIQ), and 209–267 (SHQY…LAMG). Residue Lys263 forms a Glycyl lysine isopeptide (Lys-Gly) (interchain with G-Cter in ubiquitin) linkage. A coiled-coil region spans residues 277–310 (HLAMMCALVSRQRQELQELRRELEELSIGSDGVL). Residues 307 to 462 (DGVLIWKIGS…DDAVFIRASV (156 aa)) enclose the MATH domain. Residue Ser426 is modified to Phosphoserine.

The protein belongs to the TNF receptor-associated factor family. B subfamily. As to quaternary structure, homotrimer. Interacts with LTBR/TNFRSF3, NGFR/TNFRSF16, RPS6KB1 and TGFB1I1. Interacts with SMURF1. Interacts (via TRAF domain) with MAP3K4 (via kinase domain). Interacts with NCF1, TICAM1, IRAK1 and TRAF6, and is probably part of a complex containing TRAF4, NCF1, TICAM1, IRAK1 and TRAF6. Interacts (via MATH domain) with GP6 and GP1BB. Interacts with EGFR (via C-terminal region); this interaction promotes the formation of EGFR asymmetric dimers. Interacts with PKM; this interaction promotes PKM kinase activity. Polyubiquitinated, leading to its proteasomal degradation. Ubiquitinated at Lys-263 by the SCF(FBXL2) complex, leading to its degradation by the proteasome. In terms of tissue distribution, predominantly expressed in brain. Preferentially expressed by postmitotic undifferentiated neurons in developing central (CNS) and peripheral (PNS) nervous system, and in nervous tissues of sensory organs. In the embryo, protein expression was shown in brain, thymus, salivary glands and intestine. In the adult, protein expression is restricted to the brain (hippocampus and olfactory bulb).

It is found in the cytoplasm. The protein resides in the nucleus. Its subcellular location is the perinuclear region. The protein localises to the cell junction. It localises to the tight junction. It is found in the cell membrane. The protein resides in the cytoskeleton. The enzyme catalyses S-ubiquitinyl-[E2 ubiquitin-conjugating enzyme]-L-cysteine + [acceptor protein]-L-lysine = [E2 ubiquitin-conjugating enzyme]-L-cysteine + N(6)-ubiquitinyl-[acceptor protein]-L-lysine.. The protein operates within protein degradation; proteasomal ubiquitin-dependent pathway. In terms of biological role, adapter protein with E3 ligase activity that is involved in many diverse biological processes including cell proliferation, migration, differentiation, DNA repair, platelet activation or apoptosis. Promotes EGFR-mediated signaling by facilitating the dimerization of EGFR and downstream AKT activation thereby promoting cell proliferation. Ubiquitinates SMURF2 through 'Lys-48'-linked ubiquitin chain leading to SMURF2 degradation through the proteasome and subsequently osteogenic differentiation. Promotes 'Lys-63'-mediated ubiquitination of CHK1 which in turn activates cell cycle arrest and activation of DNA repair. In addition, promotes an atypical 'Lys-29'-linked ubiquitination at the C-terminal end of IRS1 which is crucial for insulin-like growth factor (IGF) signal transduction. Regulates activation of NF-kappa-B in response to signaling through Toll-like receptors. Required for normal skeleton development, and for normal development of the respiratory tract. Required for activation of RPS6KB1 in response to TNF signaling. Modulates TRAF6 functions. Inhibits adipogenic differentiation by activating pyruvate kinase PKM activity and subsequently the beta-catenin signaling pathway. In Mus musculus (Mouse), this protein is TNF receptor-associated factor 4 (Traf4).